Consider the following 743-residue polypeptide: Catalase-peroxidase (743 aa).

The segment at 1–29 (MNAESGENAGGGCPLGHGAGAPRKRPSNR) is disordered. Gly residues predominate over residues 8 to 19 (NAGGGCPLGHGA). The segment at residues 100-222 (WHSAGTYRIT…LGAVQMGLIY (123 aa)) is a cross-link (tryptophyl-tyrosyl-methioninium (Trp-Tyr) (with M-248)). The active-site Proton acceptor is His-101. The segment at residues 222 to 248 (YVNPEGPNGNPDPKAAAVDIRETFARM) is a cross-link (tryptophyl-tyrosyl-methioninium (Tyr-Met) (with W-100)). Residue His-263 participates in heme b binding.

It belongs to the peroxidase family. Peroxidase/catalase subfamily. Homodimer or homotetramer. Requires heme b as cofactor. In terms of processing, formation of the three residue Trp-Tyr-Met cross-link is important for the catalase, but not the peroxidase activity of the enzyme.

The enzyme catalyses H2O2 + AH2 = A + 2 H2O. It carries out the reaction 2 H2O2 = O2 + 2 H2O. Functionally, bifunctional enzyme with both catalase and broad-spectrum peroxidase activity. This is Catalase-peroxidase from Stutzerimonas stutzeri (strain A1501) (Pseudomonas stutzeri).